The chain runs to 301 residues: Protoheme IX farnesyltransferase (301 aa).

The next 9 membrane-spanning stretches (helical) occupy residues 29 to 49 (VVAL…PGTV), 51 to 71 (LVPL…AAAF), 96 to 116 (ISII…FIIL), 123 to 143 (LTAW…TAYL), 151 to 171 (IVVG…AVTG), 177 to 197 (ALLL…ALAI), 223 to 243 (CIFL…LVGM), 244 to 264 (CGPV…YKAW), and 281 to 301 (FSIY…YLWV).

Belongs to the UbiA prenyltransferase family. Protoheme IX farnesyltransferase subfamily.

Its subcellular location is the cell inner membrane. The catalysed reaction is heme b + (2E,6E)-farnesyl diphosphate + H2O = Fe(II)-heme o + diphosphate. It functions in the pathway porphyrin-containing compound metabolism; heme O biosynthesis; heme O from protoheme: step 1/1. Its function is as follows. Converts heme B (protoheme IX) to heme O by substitution of the vinyl group on carbon 2 of heme B porphyrin ring with a hydroxyethyl farnesyl side group. In Shewanella pealeana (strain ATCC 700345 / ANG-SQ1), this protein is Protoheme IX farnesyltransferase.